The sequence spans 327 residues: Interleukin-12 subunit beta (327 aa).

Residues 1–22 (MHPQQLVVSWFSLVLLASPIVA) form the signal peptide. Residues 23-106 (MWELEKNVYV…LSRSLLLLHK (84 aa)) enclose the Ig-like C2-type domain. An intrachain disulfide couples cysteine 50 to cysteine 90. Asparagine 223 is a glycosylation site (N-linked (GlcNAc...) asparagine). The 90-residue stretch at 238-327 (PPKNLQLRPL…WSEWASVSCS (90 aa)) folds into the Fibronectin type-III domain.

Belongs to the IL-12B family. Heterodimer with IL12A; disulfide-linked. The heterodimer is known as interleukin IL-12. Heterodimer with IL23A; disulfide-linked. The heterodimer is known as interleukin IL-23. Also secreted as a monomer. Interacts with NBR1; this interaction promotes IL-12 secretion.

It localises to the secreted. Its function is as follows. Cytokine that can act as a growth factor for activated T and NK cells, enhance the lytic activity of NK/lymphokine-activated killer cells, and stimulate the production of IFN-gamma by resting PBMC. Functionally, associates with IL23A to form the IL-23 interleukin, a heterodimeric cytokine which functions in innate and adaptive immunity. IL-23 may constitute with IL-17 an acute response to infection in peripheral tissues. IL-23 binds to a heterodimeric receptor complex composed of IL12RB1 and IL23R, activates the Jak-Stat signaling cascade, stimulates memory rather than naive T-cells and promotes production of pro-inflammatory cytokines. IL-23 induces autoimmune inflammation and thus may be responsible for autoimmune inflammatory diseases and may be important for tumorigenesis. The sequence is that of Interleukin-12 subunit beta (IL12B) from Bos taurus (Bovine).